The following is a 207-amino-acid chain: Intraflagellar transport protein 43 homolog A (207 aa).

The disordered stretch occupies residues 1 to 104 (MDDNLQLGDS…GSDDEGDIPV (104 aa)).

This sequence belongs to the IFT43 family. Component of IFT complex A.

Functionally, component of IFT complex A (IFT-A) involved in retrograde ciliary transport along microtubules from the ciliary tip to the base. The polypeptide is Intraflagellar transport protein 43 homolog A (ift43a) (Salmo salar (Atlantic salmon)).